Consider the following 98-residue polypeptide: Aspartyl/glutamyl-tRNA(Asn/Gln) amidotransferase subunit C (98 aa).

It belongs to the GatC family. In terms of assembly, heterotrimer of A, B and C subunits.

The enzyme catalyses L-glutamyl-tRNA(Gln) + L-glutamine + ATP + H2O = L-glutaminyl-tRNA(Gln) + L-glutamate + ADP + phosphate + H(+). It carries out the reaction L-aspartyl-tRNA(Asn) + L-glutamine + ATP + H2O = L-asparaginyl-tRNA(Asn) + L-glutamate + ADP + phosphate + 2 H(+). In terms of biological role, allows the formation of correctly charged Asn-tRNA(Asn) or Gln-tRNA(Gln) through the transamidation of misacylated Asp-tRNA(Asn) or Glu-tRNA(Gln) in organisms which lack either or both of asparaginyl-tRNA or glutaminyl-tRNA synthetases. The reaction takes place in the presence of glutamine and ATP through an activated phospho-Asp-tRNA(Asn) or phospho-Glu-tRNA(Gln). In Micrococcus luteus (strain ATCC 4698 / DSM 20030 / JCM 1464 / CCM 169 / CCUG 5858 / IAM 1056 / NBRC 3333 / NCIMB 9278 / NCTC 2665 / VKM Ac-2230) (Micrococcus lysodeikticus), this protein is Aspartyl/glutamyl-tRNA(Asn/Gln) amidotransferase subunit C.